Reading from the N-terminus, the 273-residue chain is 4-hydroxy-tetrahydrodipicolinate reductase (273 aa).

NAD(+) contacts are provided by residues 11–16 (GAGGRM) and Glu-36. Arg-37 is a binding site for NADP(+). NAD(+) contacts are provided by residues 100–102 (GTT) and 124–127 (AANY). His-157 serves as the catalytic Proton donor/acceptor. His-158 lines the (S)-2,3,4,5-tetrahydrodipicolinate pocket. Lys-161 serves as the catalytic Proton donor. 167–168 (GT) is a binding site for (S)-2,3,4,5-tetrahydrodipicolinate.

Belongs to the DapB family.

The protein resides in the cytoplasm. It catalyses the reaction (S)-2,3,4,5-tetrahydrodipicolinate + NAD(+) + H2O = (2S,4S)-4-hydroxy-2,3,4,5-tetrahydrodipicolinate + NADH + H(+). The catalysed reaction is (S)-2,3,4,5-tetrahydrodipicolinate + NADP(+) + H2O = (2S,4S)-4-hydroxy-2,3,4,5-tetrahydrodipicolinate + NADPH + H(+). It functions in the pathway amino-acid biosynthesis; L-lysine biosynthesis via DAP pathway; (S)-tetrahydrodipicolinate from L-aspartate: step 4/4. Its function is as follows. Catalyzes the conversion of 4-hydroxy-tetrahydrodipicolinate (HTPA) to tetrahydrodipicolinate. The sequence is that of 4-hydroxy-tetrahydrodipicolinate reductase from Acinetobacter baylyi (strain ATCC 33305 / BD413 / ADP1).